A 184-amino-acid chain; its full sequence is Ribosome maturation factor RimM (184 aa).

One can recognise a PRC barrel domain in the interval 101 to 180; the sequence is EGEFFYCDLV…KITTHNAKTL (80 aa).

It belongs to the RimM family. As to quaternary structure, binds ribosomal protein uS19.

It localises to the cytoplasm. Its function is as follows. An accessory protein needed during the final step in the assembly of 30S ribosomal subunit, possibly for assembly of the head region. Essential for efficient processing of 16S rRNA. May be needed both before and after RbfA during the maturation of 16S rRNA. It has affinity for free ribosomal 30S subunits but not for 70S ribosomes. This chain is Ribosome maturation factor RimM, found in Helicobacter pylori (strain ATCC 700392 / 26695) (Campylobacter pylori).